Here is a 118-residue protein sequence, read N- to C-terminus: Non-specific lipid-transfer protein D (118 aa).

A signal peptide spans 1–25 (MAGLMKLACLIFACMIVAGPITSNA). Disulfide bonds link Cys-29–Cys-77, Cys-39–Cys-54, Cys-55–Cys-100, and Cys-75–Cys-114.

Belongs to the plant LTP family.

Functionally, plant non-specific lipid-transfer proteins transfer phospholipids as well as galactolipids across membranes. May play a role in wax or cutin deposition in the cell walls of expanding epidermal cells and certain secretory tissues. This Brassica oleracea var. italica (Broccoli) protein is Non-specific lipid-transfer protein D (WAX9D).